We begin with the raw amino-acid sequence, 109 residues long: Archaeosine synthase (109 aa).

Catalysis depends on Cys21, which acts as the Thioimide intermediate. Asp28 functions as the Proton donor/acceptor in the catalytic mechanism. Substrate-binding positions include Asp28, 43–46 (LAIE), and 62–63 (HE).

The protein belongs to the archaeosine synthase type 2 family. In terms of assembly, forms a symmetric tunnel-fold (T-fold) homodecamer of two head-to-head facing pentameric subunits, with 10 active sites at the intermonomer interfaces.

The catalysed reaction is 7-cyano-7-carbaguanosine(15) in tRNA + NH4(+) = archaeosine(15) in tRNA. It participates in tRNA modification; archaeosine-tRNA biosynthesis. Its function is as follows. Is responsible for the final step in the biosynthesis of archaeosine, a modified nucleoside present in the dihydrouridine loop (D-loop) of archaeal tRNA. Catalyzes the conversion of 7-cyano-7-deazaguanine (preQ0)-modified tRNA to archaeosine-tRNA, transforming a nitrile group to a formamidine group. Can use neither glutamine nor asparagine as amino donor in vitro, is only able to utilize free ammonium. However, the enzyme might function in vivo with a partner that serves to generate ammonium. This chain is Archaeosine synthase, found in Pyrobaculum calidifontis (strain DSM 21063 / JCM 11548 / VA1).